A 219-amino-acid polypeptide reads, in one-letter code: UPF0502 protein Ppro_2903 (219 aa).

It belongs to the UPF0502 family.

The sequence is that of UPF0502 protein Ppro_2903 from Pelobacter propionicus (strain DSM 2379 / NBRC 103807 / OttBd1).